Reading from the N-terminus, the 400-residue chain is Argininosuccinate synthase (400 aa).

8-16 (AYSGGLDTS) is an ATP binding site. Residues Tyr-87 and Ser-92 each contribute to the L-citrulline site. Residue Gly-117 participates in ATP binding. Positions 119, 123, and 124 each coordinate L-aspartate. Asn-123 contacts L-citrulline. L-citrulline is bound by residues Arg-127, Ser-175, Glu-259, and Tyr-271.

This sequence belongs to the argininosuccinate synthase family. Type 1 subfamily. In terms of assembly, homotetramer.

The protein localises to the cytoplasm. It catalyses the reaction L-citrulline + L-aspartate + ATP = 2-(N(omega)-L-arginino)succinate + AMP + diphosphate + H(+). The protein operates within amino-acid biosynthesis; L-arginine biosynthesis; L-arginine from L-ornithine and carbamoyl phosphate: step 2/3. This Frankia alni (strain DSM 45986 / CECT 9034 / ACN14a) protein is Argininosuccinate synthase.